A 204-amino-acid polypeptide reads, in one-letter code: Peptidyl-prolyl cis-trans isomerase CYP20-1 (204 aa).

An N-terminal signal peptide occupies residues 1 to 23; sequence MASSVTLLLWSLLLLGTLSAIQA. The region spanning 38–201 is the PPIase cyclophilin-type domain; it reads YFDVEIDGKA…SKVVIVDSGE (164 aa).

The protein belongs to the cyclophilin-type PPIase family. In terms of assembly, interacts with the PP2A A subunit PP2AA1/RCN1. Ubiquitous, mostly in aerial organs. Higher levels in leaf and buds, and lower levels in seedlings.

The protein resides in the endoplasmic reticulum. It is found in the secreted. The catalysed reaction is [protein]-peptidylproline (omega=180) = [protein]-peptidylproline (omega=0). Binds cyclosporin A (CsA). CsA mediates some of its effects via an inhibitory action on PPIase. Functionally, PPIases accelerate the folding of proteins. It catalyzes the cis-trans isomerization of proline imidic peptide bonds in oligopeptides. Seems to be involved in root development. This is Peptidyl-prolyl cis-trans isomerase CYP20-1 (CYP20-1) from Arabidopsis thaliana (Mouse-ear cress).